The sequence spans 130 residues: Protein ApaG (130 aa).

An ApaG domain is found at 3–127; sequence SAVTRGIEVT…FSLDVPEQRR (125 aa).

The polypeptide is Protein ApaG (Brucella suis biovar 1 (strain 1330)).